The following is a 229-amino-acid chain: 5'-methylthioadenosine/S-adenosylhomocysteine nucleosidase (229 aa).

Catalysis depends on Glu12, which acts as the Proton acceptor. Substrate is bound by residues Gly78, Ile152, and 173–174 (ME). Residue Asp197 is the Proton donor of the active site.

This sequence belongs to the PNP/UDP phosphorylase family. MtnN subfamily.

It carries out the reaction S-adenosyl-L-homocysteine + H2O = S-(5-deoxy-D-ribos-5-yl)-L-homocysteine + adenine. The enzyme catalyses S-methyl-5'-thioadenosine + H2O = 5-(methylsulfanyl)-D-ribose + adenine. It catalyses the reaction 5'-deoxyadenosine + H2O = 5-deoxy-D-ribose + adenine. Its pathway is amino-acid biosynthesis; L-methionine biosynthesis via salvage pathway; S-methyl-5-thio-alpha-D-ribose 1-phosphate from S-methyl-5'-thioadenosine (hydrolase route): step 1/2. Catalyzes the irreversible cleavage of the glycosidic bond in both 5'-methylthioadenosine (MTA) and S-adenosylhomocysteine (SAH/AdoHcy) to adenine and the corresponding thioribose, 5'-methylthioribose and S-ribosylhomocysteine, respectively. Also cleaves 5'-deoxyadenosine, a toxic by-product of radical S-adenosylmethionine (SAM) enzymes, into 5-deoxyribose and adenine. This is 5'-methylthioadenosine/S-adenosylhomocysteine nucleosidase from Mannheimia succiniciproducens (strain KCTC 0769BP / MBEL55E).